The chain runs to 133 residues: Large ribosomal subunit protein uL14 (133 aa).

It belongs to the universal ribosomal protein uL14 family. In terms of assembly, part of the 50S ribosomal subunit. Forms a cluster with proteins L3 and L24e, part of which may contact the 16S rRNA in 2 intersubunit bridges.

In terms of biological role, binds to 23S rRNA. Forms part of two intersubunit bridges in the 70S ribosome. In Nanoarchaeum equitans (strain Kin4-M), this protein is Large ribosomal subunit protein uL14.